The following is an 84-amino-acid chain: RNA-binding protein Hfq (84 aa).

One can recognise a Sm domain in the interval Asp9–Val68.

Belongs to the Hfq family. In terms of assembly, homohexamer.

RNA chaperone that binds small regulatory RNA (sRNAs) and mRNAs to facilitate mRNA translational regulation in response to envelope stress, environmental stress and changes in metabolite concentrations. Also binds with high specificity to tRNAs. The protein is RNA-binding protein Hfq of Stutzerimonas stutzeri (strain A1501) (Pseudomonas stutzeri).